The primary structure comprises 674 residues: Probable copper-transporting P-type ATPase B (674 aa).

Positions 1–22 (MNHSNQMHHDNHASHDHHSGHA) are disordered. The segment covering 7–19 (MHHDNHASHDHHS) has biased composition (basic and acidic residues). 6 consecutive transmembrane segments (helical) span residues 32–52 (FFVS…MGVN), 57–77 (FTFP…FFYG), 95–115 (GMMT…LYAF), 127–147 (TMDF…GHWI), 284–304 (GYLF…WMLI), and 315–335 (LVTV…PLVT). Asp-367 (4-aspartylphosphate intermediate) is an active-site residue. The Mg(2+) site is built by Asp-565 and Asp-569. The next 2 membrane-spanning stretches (helical) occupy residues 623–645 (LWWG…AFIG) and 649–671 (SPAI…AFTL).

This sequence belongs to the cation transport ATPase (P-type) (TC 3.A.3) family. Type IB subfamily.

The protein resides in the cell membrane. The catalysed reaction is Cu(+)(in) + ATP + H2O = Cu(+)(out) + ADP + phosphate + H(+). Its function is as follows. Involved in copper transport. In Staphylococcus aureus (strain USA300 / TCH1516), this protein is Probable copper-transporting P-type ATPase B (copB).